A 410-amino-acid polypeptide reads, in one-letter code: Lissencephaly-1 homolog (410 aa).

The 33-residue stretch at 7-39 folds into the LisH domain; that stretch reads QRDELNRAIADYLRSNGYEEAYSVFKKEAELDV. Residues 56 to 82 are a coiled coil; that stretch reads TSVIRLQKKVMELESKLNEAKEEFTSG. 7 WD repeats span residues 106-147, 148-187, 190-229, 232-271, 274-333, 336-377, and 378-410; these read GHRS…RTLK, GHTD…CIRT, GHDH…CVKT, GHRE…CKAE, EHEH…CLMT, GHDN…KTLN, and AHEH…WECR.

This sequence belongs to the WD repeat LIS1/nudF family. Can self-associate. Component of the cytosolic PAF-AH (I) heterotetrameric enzyme, which is composed of PAFAH1B1 (beta), PAFAH1B2 (alpha2) and PAFAH1B3 (alpha1) subunits. The catalytic activity of the enzyme resides in the alpha1 (PAFAH1B3) and alpha2 (PAFAH1B2) subunits, whereas the beta subunit (PAFAH1B1) has regulatory activity. Trimer formation is not essential for the catalytic activity. Interacts with dynein, dynactin, NDE1 and NDEL1.

It localises to the cytoplasm. The protein localises to the cytoskeleton. Its subcellular location is the microtubule organizing center. The protein resides in the centrosome. Its function is as follows. Regulatory subunit (beta subunit) of the cytosolic type I platelet-activating factor (PAF) acetylhydrolase (PAF-AH (I)), an enzyme that catalyzes the hydrolyze of the acetyl group at the sn-2 position of PAF and its analogs and participates in PAF inactivation. Regulates the PAF-AH (I) activity in a catalytic dimer composition-dependent manner. Positively regulates the activity of the minus-end directed microtubule motor protein dynein. May enhance dynein-mediated microtubule sliding by targeting dynein to the microtubule plus end. Required for several dynein- and microtubule-dependent processes such as the maintenance of Golgi integrity, the peripheral transport of microtubule fragments and the coupling of the nucleus and centrosome. May be required for proliferation of neuronal precursors and neuronal migration. The protein is Lissencephaly-1 homolog of Gallus gallus (Chicken).